The following is a 237-amino-acid chain: Probable septum site-determining protein MinC (237 aa).

This sequence belongs to the MinC family. In terms of assembly, interacts with MinD and FtsZ.

Functionally, cell division inhibitor that blocks the formation of polar Z ring septums. Rapidly oscillates between the poles of the cell to destabilize FtsZ filaments that have formed before they mature into polar Z rings. Prevents FtsZ polymerization. This is Probable septum site-determining protein MinC from Neisseria gonorrhoeae.